A 466-amino-acid chain; its full sequence is uncharacterized protein (466 aa).

The tract at residues 1 to 22 (MKKNNERVNTNPSLISKSYNMK) is disordered. Positions 7 to 19 (RVNTNPSLISKSY) are enriched in polar residues. A phosphoserine mark is found at serine 40 and serine 42. The region spanning 108–183 (YFVHMDNISP…RLISATITNH (76 aa)) is the RRM domain. The disordered stretch occupies residues 186–207 (RLPNAEHLESSTKTKDESQDKD). The segment covering 188–207 (PNAEHLESSTKTKDESQDKD) has biased composition (basic and acidic residues). The region spanning 209–368 (LTKLDRAKLE…RAWRNFSGNT (160 aa)) is the CID domain. Serine 371 bears the Phosphoserine mark. Residues 425–436 (STETSSSSSPQP) are compositionally biased toward low complexity. The interval 425-448 (STETSSSSSPQPTEERKAKFKPSF) is disordered.

Its subcellular location is the nucleus. The protein localises to the cytoplasm. This is an uncharacterized protein from Schizosaccharomyces pombe (strain 972 / ATCC 24843) (Fission yeast).